A 243-amino-acid chain; its full sequence is NAD-dependent protein deacetylase (243 aa).

The 243-residue stretch at 1-243 (MRNDLETLKH…VSVVKSLMTE (243 aa)) folds into the Deacetylase sirtuin-type domain. Positions 24, 35, 36, 105, 107, 108, and 123 each coordinate NAD(+). Phe35 lines the nicotinamide pocket. Nicotinamide is bound by residues Ile107 and Asp108. The active-site Proton acceptor is His123. The Zn(2+) site is built by Cys131, Cys134, Cys151, and Cys154. Residues Ser192, Ser193, Asn215, and Asp232 each contribute to the NAD(+) site.

This sequence belongs to the sirtuin family. Class U subfamily. Zn(2+) serves as cofactor.

It localises to the cytoplasm. The catalysed reaction is N(6)-acetyl-L-lysyl-[protein] + NAD(+) + H2O = 2''-O-acetyl-ADP-D-ribose + nicotinamide + L-lysyl-[protein]. NAD-dependent protein deacetylase which modulates the activities of several enzymes which are inactive in their acetylated form. The sequence is that of NAD-dependent protein deacetylase from Staphylococcus aureus (strain Mu50 / ATCC 700699).